The sequence spans 318 residues: Coproporphyrin III ferrochelatase (318 aa).

Fe(2+) contacts are provided by H186 and E268.

It belongs to the ferrochelatase family.

It is found in the cytoplasm. It catalyses the reaction Fe-coproporphyrin III + 2 H(+) = coproporphyrin III + Fe(2+). The protein operates within porphyrin-containing compound metabolism; protoheme biosynthesis. Involved in coproporphyrin-dependent heme b biosynthesis. Catalyzes the insertion of ferrous iron into coproporphyrin III to form Fe-coproporphyrin III. The sequence is that of Coproporphyrin III ferrochelatase from Lactococcus lactis subsp. cremoris (strain SK11).